A 336-amino-acid chain; its full sequence is 4-hydroxy-3-methylbut-2-enyl diphosphate reductase (336 aa).

Cys-37 contacts [4Fe-4S] cluster. 2 residues coordinate (2E)-4-hydroxy-3-methylbut-2-enyl diphosphate: His-66 and His-99. The dimethylallyl diphosphate site is built by His-66 and His-99. Isopentenyl diphosphate contacts are provided by His-66 and His-99. Cys-121 is a [4Fe-4S] cluster binding site. Residue His-149 coordinates (2E)-4-hydroxy-3-methylbut-2-enyl diphosphate. Residue His-149 participates in dimethylallyl diphosphate binding. An isopentenyl diphosphate-binding site is contributed by His-149. The Proton donor role is filled by Glu-151. Thr-189 lines the (2E)-4-hydroxy-3-methylbut-2-enyl diphosphate pocket. Cys-219 contacts [4Fe-4S] cluster. (2E)-4-hydroxy-3-methylbut-2-enyl diphosphate-binding residues include Ser-247, Ser-248, Asn-249, and Ser-292. Dimethylallyl diphosphate is bound by residues Ser-247, Ser-248, Asn-249, and Ser-292. Isopentenyl diphosphate-binding residues include Ser-247, Ser-248, Asn-249, and Ser-292.

This sequence belongs to the IspH family. The cofactor is [4Fe-4S] cluster.

It catalyses the reaction isopentenyl diphosphate + 2 oxidized [2Fe-2S]-[ferredoxin] + H2O = (2E)-4-hydroxy-3-methylbut-2-enyl diphosphate + 2 reduced [2Fe-2S]-[ferredoxin] + 2 H(+). The enzyme catalyses dimethylallyl diphosphate + 2 oxidized [2Fe-2S]-[ferredoxin] + H2O = (2E)-4-hydroxy-3-methylbut-2-enyl diphosphate + 2 reduced [2Fe-2S]-[ferredoxin] + 2 H(+). It functions in the pathway isoprenoid biosynthesis; dimethylallyl diphosphate biosynthesis; dimethylallyl diphosphate from (2E)-4-hydroxy-3-methylbutenyl diphosphate: step 1/1. Its pathway is isoprenoid biosynthesis; isopentenyl diphosphate biosynthesis via DXP pathway; isopentenyl diphosphate from 1-deoxy-D-xylulose 5-phosphate: step 6/6. Functionally, catalyzes the conversion of 1-hydroxy-2-methyl-2-(E)-butenyl 4-diphosphate (HMBPP) into a mixture of isopentenyl diphosphate (IPP) and dimethylallyl diphosphate (DMAPP). Acts in the terminal step of the DOXP/MEP pathway for isoprenoid precursor biosynthesis. The sequence is that of 4-hydroxy-3-methylbut-2-enyl diphosphate reductase from Nocardia farcinica (strain IFM 10152).